The chain runs to 225 residues: Putative 5'-nucleotidase alr3139 (225 aa).

A divalent metal cation is bound by residues Asp-8, Asp-9, Ser-37, and Asn-88.

The protein belongs to the SurE nucleotidase family. A divalent metal cation is required as a cofactor.

The protein resides in the cytoplasm. It catalyses the reaction a ribonucleoside 5'-phosphate + H2O = a ribonucleoside + phosphate. Functionally, nucleotidase that shows phosphatase activity on nucleoside 5'-monophosphates. In Synechocystis sp. (strain ATCC 27184 / PCC 6803 / Kazusa), this protein is Putative 5'-nucleotidase alr3139.